A 176-amino-acid polypeptide reads, in one-letter code: Large ribosomal subunit protein uL6 (176 aa).

The protein belongs to the universal ribosomal protein uL6 family. In terms of assembly, part of the 50S ribosomal subunit.

Its function is as follows. This protein binds to the 23S rRNA, and is important in its secondary structure. It is located near the subunit interface in the base of the L7/L12 stalk, and near the tRNA binding site of the peptidyltransferase center. This Lacticaseibacillus paracasei (strain ATCC 334 / BCRC 17002 / CCUG 31169 / CIP 107868 / KCTC 3260 / NRRL B-441) (Lactobacillus paracasei) protein is Large ribosomal subunit protein uL6.